The primary structure comprises 81 residues: Sulfur carrier protein TusA (81 aa).

Residue C19 is the Cysteine persulfide intermediate of the active site.

Belongs to the sulfur carrier protein TusA family. In terms of assembly, interacts with IscS.

It is found in the cytoplasm. It participates in tRNA modification. Functionally, sulfur carrier protein involved in sulfur trafficking in the cell. Part of a sulfur-relay system required for 2-thiolation during synthesis of 2-thiouridine of the modified wobble base 5-methylaminomethyl-2-thiouridine (mnm(5)s(2)U) in tRNA. Interacts with IscS and stimulates its cysteine desulfurase activity. Accepts an activated sulfur from IscS, which is then transferred to TusD, and thus determines the direction of sulfur flow from IscS to 2-thiouridine formation. Also appears to be involved in sulfur transfer for the biosynthesis of molybdopterin. In Serratia proteamaculans (strain 568), this protein is Sulfur carrier protein TusA.